The sequence spans 289 residues: Dehydrodolichyl diphosphate synthase 4 (289 aa).

Residues 2–22 (LSMLWFLLSLLSLLLLPCLRP) traverse the membrane as a helical segment.

The protein belongs to the UPP synthase family. It depends on Mg(2+) as a cofactor.

It is found in the endoplasmic reticulum membrane. The protein operates within protein modification; protein glycosylation. Catalyzes cis-prenyl chain elongation to produce the polyprenyl backbone of dolichol, a glycosyl carrier-lipid required for the biosynthesis of several classes of glycoprotein. This chain is Dehydrodolichyl diphosphate synthase 4, found in Arabidopsis thaliana (Mouse-ear cress).